A 268-amino-acid polypeptide reads, in one-letter code: Centromere protein Q (268 aa).

Residues methionine 1–serine 31 form a disordered region. Serine 31 is subject to Phosphoserine. A coiled-coil region spans residues glutamate 170–isoleucine 203. Serine 249 is modified (phosphoserine).

This sequence belongs to the CENP-Q/OKP1 family. As to quaternary structure, component of the CENPA-CAD complex, composed of CENPI, CENPK, CENPL, CENPO, CENPP, CENPQ, CENPR and CENPS. The CENPA-CAD complex interacts with the CENPA-NAC complex, at least composed of CENPA, CENPC, CENPH, CENPM, CENPN, CENPT and CENPU.

It is found in the nucleus. The protein localises to the chromosome. The protein resides in the centromere. Its function is as follows. Component of the CENPA-CAD (nucleosome distal) complex, a complex recruited to centromeres which is involved in assembly of kinetochore proteins, mitotic progression and chromosome segregation. May be involved in incorporation of newly synthesized CENPA into centromeres via its interaction with the CENPA-NAC complex. Plays an important role in chromosome congression and in the recruitment of CENP-O complex (which comprises CENPO, CENPP, CENPQ and CENPU), CENPE and PLK1 to the kinetochores. This is Centromere protein Q (CENPQ) from Macaca fascicularis (Crab-eating macaque).